Reading from the N-terminus, the 337-residue chain is Mycothiol acetyltransferase (337 aa).

N-acetyltransferase domains are found at residues Leu-11–Pro-151 and Val-154–Lys-337. Residue Glu-37 participates in 1D-myo-inositol 2-(L-cysteinylamino)-2-deoxy-alpha-D-glucopyranoside binding. Leu-81–Ile-83 serves as a coordination point for acetyl-CoA. Glu-182 provides a ligand contact to 1D-myo-inositol 2-(L-cysteinylamino)-2-deoxy-alpha-D-glucopyranoside. The segment at Arg-210–Asp-246 is disordered. Residues Asp-221–Ser-234 show a composition bias toward low complexity. The span at Ala-235–Asp-246 shows a compositional bias: gly residues. The 1D-myo-inositol 2-(L-cysteinylamino)-2-deoxy-alpha-D-glucopyranoside site is built by Lys-257 and Glu-271. Residues Val-275–Val-277 and Gln-282–Arg-288 each bind acetyl-CoA. Tyr-309 contacts 1D-myo-inositol 2-(L-cysteinylamino)-2-deoxy-alpha-D-glucopyranoside. Asn-314–Arg-319 serves as a coordination point for acetyl-CoA.

The protein belongs to the acetyltransferase family. MshD subfamily. In terms of assembly, monomer.

The catalysed reaction is 1D-myo-inositol 2-(L-cysteinylamino)-2-deoxy-alpha-D-glucopyranoside + acetyl-CoA = mycothiol + CoA + H(+). In terms of biological role, catalyzes the transfer of acetyl from acetyl-CoA to desacetylmycothiol (Cys-GlcN-Ins) to form mycothiol. This Streptosporangium roseum (strain ATCC 12428 / DSM 43021 / JCM 3005 / KCTC 9067 / NCIMB 10171 / NRRL 2505 / NI 9100) protein is Mycothiol acetyltransferase.